The primary structure comprises 361 residues: MLFEFARWLQQFESLFGLFNYLTFRSILAALTALFLSLWIGPVLIQKLSQFKGGQPIRQDGPKMHFSKAGTPTMGGSLILMTVTLSVLLWGDLRNRYVWLVLVVMLAFGAIGWYDDWIKLARRDPNGLKSRWKYLLQSIFGLAAGLFLYFTADVPAAVTFYIPMFKSIALPLTSISFVAITYFWIVGFSNAVNLTDGLDGLAIMPTVLVACALGVFAYASGNTLFSSYLKIPTIPGAGDLIIICAAIAGAGLGFLWFNAYPAMVFMGDIGALALGAVLGTIAVIVRQELVLVVMGGVFVIETLSVIIQVTSFKLTGKRVFRMAPIHHHFELKGWPEPRVIVRFWIISVVLVLVGLATLKVR.

The next 10 helical transmembrane spans lie at 26-46, 73-93, 98-118, 139-159, 168-188, 200-220, 237-257, 264-284, 289-309, and 339-359; these read SILA…VLIQ, TMGG…WGDL, VWLV…DDWI, IFGL…AAVT, IALP…IVGF, GLAI…AYAS, AGDL…FLWF, VFMG…IAVI, LVLV…IIQV, and VIVR…ATLK.

Belongs to the glycosyltransferase 4 family. MraY subfamily. The cofactor is Mg(2+).

The protein localises to the cell inner membrane. The enzyme catalyses UDP-N-acetyl-alpha-D-muramoyl-L-alanyl-gamma-D-glutamyl-meso-2,6-diaminopimeloyl-D-alanyl-D-alanine + di-trans,octa-cis-undecaprenyl phosphate = di-trans,octa-cis-undecaprenyl diphospho-N-acetyl-alpha-D-muramoyl-L-alanyl-D-glutamyl-meso-2,6-diaminopimeloyl-D-alanyl-D-alanine + UMP. It functions in the pathway cell wall biogenesis; peptidoglycan biosynthesis. Functionally, catalyzes the initial step of the lipid cycle reactions in the biosynthesis of the cell wall peptidoglycan: transfers peptidoglycan precursor phospho-MurNAc-pentapeptide from UDP-MurNAc-pentapeptide onto the lipid carrier undecaprenyl phosphate, yielding undecaprenyl-pyrophosphoryl-MurNAc-pentapeptide, known as lipid I. The protein is Phospho-N-acetylmuramoyl-pentapeptide-transferase of Xylella fastidiosa (strain M12).